A 70-amino-acid polypeptide reads, in one-letter code: DNA-directed RNA polymerases I, II, and III subunit RPABC4 (70 aa).

Zn(2+) is bound by residues Cys-31, Cys-34, Cys-48, and Cys-51. Residues 31-51 (CAECSSKLSLSRTDAVRCKDC) form a C4-type zinc finger.

It belongs to the archaeal Rpo12/eukaryotic RPC10 RNA polymerase subunit family. As to quaternary structure, component of the RNA polymerase I (Pol I), RNA polymerase II (Pol II) and RNA polymerase III (Pol III) complexes. Component of the RNA polymerase I (Pol I) complex consisting of 14 subunits: RPA135, RPA190, RPC40, RPA14, RPB5, RPO26, RPA43, RPB8, RPA12, RPB10, RPC19, RPC10, RPA49 and RPA34. The complex is composed of a horseshoe-shaped core containing ten subunits (RPA135, RPA190, RPB5, RPO26, RPB8, RPB10, RPC10, RPA12, RPC19 and RPC40) where RPA135 and RPA190 form the DNA-binding cleft. Outside of the core, RPA14 and RPA43 form the stalk that mediates interactions with transcription initiation factors and newly synthesized RNA. Component of the RNA polymerase II (Pol II) complex consisting of 12 subunits: RPO21, RPB2, RPB3, RPB4, RPB5, RPO26, RPB7, RPB8, RPB9, RPB10 and RPC10. Component of the RNA polymerase III (Pol III) complex consisting of 17 subunits. Interacts, via its C-terminus, with TFIIIC subunit TFC4. Post-translationally, the N-terminus is blocked.

Its subcellular location is the nucleus. It is found in the nucleolus. The protein localises to the peroxisome. Functionally, DNA-dependent RNA polymerases catalyze the transcription of DNA into RNA using the four ribonucleoside triphosphates as substrates. Common component of RNA polymerases I, II and III which synthesize ribosomal RNA precursors, mRNA precursors and many functional non-coding RNAs, and a small RNAs, such as 5S rRNA and tRNAs, respectively. RNA polymerases are composed of mobile elements that move relative to each other. In Pol II, the core element with the central large cleft comprises RPB3, RBP10, RPB11, RPB12 and regions of RPB1 and RPB2 forming the active center. The sequence is that of DNA-directed RNA polymerases I, II, and III subunit RPABC4 (RPC10) from Saccharomyces cerevisiae (strain ATCC 204508 / S288c) (Baker's yeast).